The following is a 409-amino-acid chain: Peptidase T (409 aa).

H78 is a binding site for Zn(2+). The active site involves D80. D141 contributes to the Zn(2+) binding site. Catalysis depends on E175, which acts as the Proton acceptor. Zn(2+) contacts are provided by E176, D198, and H380.

It belongs to the peptidase M20B family. Zn(2+) serves as cofactor.

It is found in the cytoplasm. It catalyses the reaction Release of the N-terminal residue from a tripeptide.. In terms of biological role, cleaves the N-terminal amino acid of tripeptides. This chain is Peptidase T, found in Caldanaerobacter subterraneus subsp. tengcongensis (strain DSM 15242 / JCM 11007 / NBRC 100824 / MB4) (Thermoanaerobacter tengcongensis).